Reading from the N-terminus, the 175-residue chain is Peptide methionine sulfoxide reductase MsrA (175 aa).

Residue Cys10 is part of the active site.

The protein belongs to the MsrA Met sulfoxide reductase family.

It catalyses the reaction L-methionyl-[protein] + [thioredoxin]-disulfide + H2O = L-methionyl-(S)-S-oxide-[protein] + [thioredoxin]-dithiol. The catalysed reaction is [thioredoxin]-disulfide + L-methionine + H2O = L-methionine (S)-S-oxide + [thioredoxin]-dithiol. Functionally, has an important function as a repair enzyme for proteins that have been inactivated by oxidation. Catalyzes the reversible oxidation-reduction of methionine sulfoxide in proteins to methionine. The chain is Peptide methionine sulfoxide reductase MsrA from Psychrobacter sp. (strain PRwf-1).